The sequence spans 347 residues: MNHIQILEYENECQLANEVTYHPVYRIAQLWTFVVSILAIPALYIFLMKRILPLPFHGNIKFLLVCYFSASFVFAVLLAFLFSYHVVAPLFITSMCDLIIRPSLYKVGNLSLTLFMTIQMIMPLGFSIERFIALSMTKSYENVRTFLGPLLVFTLIGIDLALLYHVFRDEKFEDSFISFALVPETSAIPFNSYFWELLYAEIGNFICNCIFLLVHSKFKARFLHQQRSLSVRYLLEEISQTSKFTLIVSFTHLLFVGWYLIATIFVRTIGEDFFGGYIHYTVARGVHITVPTYNLTIVFVGIKALSFMNLRRQNNVQSKVQIRSTGAEGARNYEDAIANYWNFVSRT.

7 consecutive transmembrane segments (helical) span residues 27 to 47 (IAQL…YIFL), 62 to 82 (FLLV…AFLF), 108 to 128 (GNLS…GFSI), 146 to 166 (FLGP…LYHV), 194 to 214 (FWEL…FLLV), 246 to 266 (LIVS…TIFV), and 288 to 308 (ITVP…LSFM).

The protein belongs to the nematode receptor-like protein srb family.

It localises to the membrane. In Caenorhabditis elegans, this protein is Serpentine receptor class beta-2 (srb-2).